Consider the following 636-residue polypeptide: Fructose-1,6-bisphosphatase class 3 (636 aa).

This sequence belongs to the FBPase class 3 family. Mn(2+) serves as cofactor.

It catalyses the reaction beta-D-fructose 1,6-bisphosphate + H2O = beta-D-fructose 6-phosphate + phosphate. It functions in the pathway carbohydrate biosynthesis; gluconeogenesis. The chain is Fructose-1,6-bisphosphatase class 3 from Streptococcus sanguinis (strain SK36).